The following is a 268-amino-acid chain: tRNA pseudouridine synthase A (268 aa).

Aspartate 52 serves as the catalytic Nucleophile. Tyrosine 113 provides a ligand contact to substrate.

It belongs to the tRNA pseudouridine synthase TruA family. In terms of assembly, homodimer.

It carries out the reaction uridine(38/39/40) in tRNA = pseudouridine(38/39/40) in tRNA. Formation of pseudouridine at positions 38, 39 and 40 in the anticodon stem and loop of transfer RNAs. The sequence is that of tRNA pseudouridine synthase A from Chlamydia felis (strain Fe/C-56) (Chlamydophila felis).